Reading from the N-terminus, the 131-residue chain is MRHRHGLRKLNRTSSHRLAMLRNMSNSLIEHEVIKTTLPKAKELRKVVEPLITLGKKPSLANRRLAFNRLRDRDSVTKLFDVLGPRFANRPGGYLRILKFGFRVGDNAPMALVELLDRPEVEEVENVAEAE.

The protein belongs to the bacterial ribosomal protein bL17 family. As to quaternary structure, part of the 50S ribosomal subunit. Contacts protein L32.

In Paraburkholderia phymatum (strain DSM 17167 / CIP 108236 / LMG 21445 / STM815) (Burkholderia phymatum), this protein is Large ribosomal subunit protein bL17.